The chain runs to 312 residues: L-type lectin-like domain-containing protein C126.08c (312 aa).

An N-terminal signal peptide occupies residues 1–22 (MFFSVKNVFLLGIFGFVLGALA). Topologically, residues 23–280 (ETSHLERLSL…QKKGSFKKRL (258 aa)) are extracellular. The 225-residue stretch at 24–248 (TSHLERLSLE…EIASILSRTI (225 aa)) folds into the L-type lectin-like domain. Residues 281 to 301 (IILLLSLIVIFSIFALRSYQV) traverse the membrane as a helical segment. Topologically, residues 302-312 (QQEKNRRTTVL) are cytoplasmic.

Its subcellular location is the membrane. It is found in the endoplasmic reticulum. The protein resides in the golgi apparatus. It localises to the vacuole. This chain is L-type lectin-like domain-containing protein C126.08c, found in Schizosaccharomyces pombe (strain 972 / ATCC 24843) (Fission yeast).